A 946-amino-acid polypeptide reads, in one-letter code: Bifunctional glutamine synthetase adenylyltransferase/adenylyl-removing enzyme (946 aa).

Positions 1-440 are adenylyl removase; the sequence is MKPLSSPLQQ…VFNELIGDDE (440 aa). The adenylyl transferase stretch occupies residues 449-946; the sequence is SEQWRELWQD…ASWQKWLVEE (498 aa).

This sequence belongs to the GlnE family. The cofactor is Mg(2+).

The catalysed reaction is [glutamine synthetase]-O(4)-(5'-adenylyl)-L-tyrosine + phosphate = [glutamine synthetase]-L-tyrosine + ADP. It catalyses the reaction [glutamine synthetase]-L-tyrosine + ATP = [glutamine synthetase]-O(4)-(5'-adenylyl)-L-tyrosine + diphosphate. In terms of biological role, involved in the regulation of glutamine synthetase GlnA, a key enzyme in the process to assimilate ammonia. When cellular nitrogen levels are high, the C-terminal adenylyl transferase (AT) inactivates GlnA by covalent transfer of an adenylyl group from ATP to specific tyrosine residue of GlnA, thus reducing its activity. Conversely, when nitrogen levels are low, the N-terminal adenylyl removase (AR) activates GlnA by removing the adenylyl group by phosphorolysis, increasing its activity. The regulatory region of GlnE binds the signal transduction protein PII (GlnB) which indicates the nitrogen status of the cell. In Escherichia coli (strain K12 / MC4100 / BW2952), this protein is Bifunctional glutamine synthetase adenylyltransferase/adenylyl-removing enzyme.